The sequence spans 147 residues: Large ribosomal subunit protein uL13 (147 aa).

The interval 128–147 (DQHPHGAQQPQPFEITQVAQ) is disordered.

The protein belongs to the universal ribosomal protein uL13 family. Part of the 50S ribosomal subunit.

In terms of biological role, this protein is one of the early assembly proteins of the 50S ribosomal subunit, although it is not seen to bind rRNA by itself. It is important during the early stages of 50S assembly. The polypeptide is Large ribosomal subunit protein uL13 (Streptomyces coelicolor (strain ATCC BAA-471 / A3(2) / M145)).